A 438-amino-acid chain; its full sequence is GTPase Der (438 aa).

2 EngA-type G domains span residues 4–168 (PIVA…PAVP) and 176–351 (LKVA…EAAN). Residues 10–17 (GRPNVGKS), 57–61 (DTGGI), 120–123 (NKVE), 182–189 (GRPNVGKS), 229–233 (DTAGM), and 294–297 (NKWD) each bind GTP. A KH-like domain is found at 352 to 436 (RRVATGTLNA…PIRLIFRRGR (85 aa)).

The protein belongs to the TRAFAC class TrmE-Era-EngA-EngB-Septin-like GTPase superfamily. EngA (Der) GTPase family. As to quaternary structure, associates with the 50S ribosomal subunit.

GTPase that plays an essential role in the late steps of ribosome biogenesis. This is GTPase Der from Moorella thermoacetica (strain ATCC 39073 / JCM 9320).